Consider the following 259-residue polypeptide: 5'-nucleotidase SurE (259 aa).

A divalent metal cation contacts are provided by Asp-8, Asp-9, Ser-40, and Asn-92.

It belongs to the SurE nucleotidase family. A divalent metal cation serves as cofactor.

It localises to the cytoplasm. The enzyme catalyses a ribonucleoside 5'-phosphate + H2O = a ribonucleoside + phosphate. Functionally, nucleotidase that shows phosphatase activity on nucleoside 5'-monophosphates. This chain is 5'-nucleotidase SurE, found in Xanthomonas campestris pv. campestris (strain 8004).